A 162-amino-acid polypeptide reads, in one-letter code: Troponin C, skeletal muscle (162 aa).

EF-hand domains follow at residues 17 to 52 (EMIA…LGQN), 53 to 88 (PTKE…QMKE), 93 to 128 (KSEE…TGEH), and 129 to 162 (VTEE…EGVQ). Ca(2+) contacts are provided by Asp30, Asp32, Asp36, Glu41, Asp66, Asp68, Ser70, Thr72, Glu77, Asp106, Asn108, Asp110, Glu117, Asp142, Asn144, Asp146, Arg148, and Glu153.

Belongs to the troponin C family.

Its function is as follows. Troponin is the central regulatory protein of striated muscle contraction. Tn consists of three components: Tn-I which is the inhibitor of actomyosin ATPase, Tn-T which contains the binding site for tropomyosin and Tn-C. The binding of calcium to Tn-C abolishes the inhibitory action of Tn on actin filaments. The chain is Troponin C, skeletal muscle (TNNC2) from Meleagris gallopavo (Wild turkey).